We begin with the raw amino-acid sequence, 348 residues long: MNRSSFDLLSTVEYGGCSAKLDPAKLSELLHDIPLPVDSRIMVDVSTHDDAGVYRLNDDTALIVTTDFFPPVCSDPYTFGRIAAANALSDVYAMGGRPLLVLNLTMFPSEGIPVEVLADILRGGQQTIDESGAFTMGGHTIDDPIPKYGLAVTGIVHPEHLVTNAGVRAGQCLVLTKPLGIGVAMAAHRLGLIGSEVYEAAIGQMCLLNRAGAELMQKYGIRGATDITGFGLLGHAKELAEASDVCLHIDSRSVPVLPECLSLLRDGCIPGATFRNLRFVGDMLRADCPTEYKMLLADAQTSGGLLMAVDADRAEDLVADLHRTGLHPFAAIIGYATDAEDAAKLIVT.

The active site involves C17. Residues K20 and T47–D49 contribute to the ATP site. A Mg(2+)-binding site is contributed by D50. ATP-binding positions include D67, D90, and G138–T140. A Mg(2+)-binding site is contributed by D90. Position 226 (D226) interacts with Mg(2+).

Belongs to the selenophosphate synthase 1 family. Class I subfamily. In terms of assembly, homodimer. Mg(2+) is required as a cofactor.

The enzyme catalyses hydrogenselenide + ATP + H2O = selenophosphate + AMP + phosphate + 2 H(+). Functionally, synthesizes selenophosphate from selenide and ATP. The protein is Selenide, water dikinase of Porphyromonas gingivalis (strain ATCC 33277 / DSM 20709 / CIP 103683 / JCM 12257 / NCTC 11834 / 2561).